We begin with the raw amino-acid sequence, 116 residues long: Thioredoxin H-type (116 aa).

The region spanning 2 to 115 is the Thioredoxin domain; that stretch reads AEEAQVIACH…HKIAVHAPIT (114 aa). Catalysis depends on nucleophile residues C39 and C42. A disulfide bridge links C39 with C42.

The protein belongs to the thioredoxin family. Plant H-type subfamily.

It localises to the cytoplasm. Its function is as follows. Participates in various redox reactions through the reversible oxidation of the active center dithiol to a disulfide. The H form is known to activate a number of cytosolic enzymes. This Fagopyrum esculentum (Common buckwheat) protein is Thioredoxin H-type.